The primary structure comprises 312 residues: Zinc transporter ZitB (312 aa).

5 consecutive transmembrane segments (helical) span residues 21 to 41 (LLFAFIVTAGFMLLEVVGGIL), 48 to 68 (LADAGHMLTDAAALLFALLAV), 90 to 110 (AAFVNAIALVVITLLIVWEAI), 123 to 143 (LMMVIAVAGLLANLFAFWILH), and 164 to 184 (LLGSVGAIVAALIIIWTGWTP).

This sequence belongs to the cation diffusion facilitator (CDF) transporter (TC 2.A.4) family. SLC30A subfamily.

It is found in the cell inner membrane. Functionally, involved in zinc efflux across the cytoplasmic membrane, thus reducing zinc accumulation in the cytoplasm and rendering bacteria more resistant to zinc. It may contribute to zinc homeostasis at low concentrations of zinc. The chain is Zinc transporter ZitB from Salmonella typhimurium (strain LT2 / SGSC1412 / ATCC 700720).